Reading from the N-terminus, the 403-residue chain is RNA-binding motif, single-stranded-interacting protein 1 (403 aa).

The interval 30 to 56 is disordered; the sequence is PAHPMAPPSPSTTSSNNNSSSSSNSGW. A compositionally biased stretch (low complexity) spans 40–54; that stretch reads STTSSNNNSSSSSNS. RRM domains lie at 62 to 135 and 141 to 226; these read TNLY…MAKQ and TNLY…FADG. Thr208 is subject to Phosphothreonine.

It is found in the nucleus. Single-stranded DNA binding protein that interacts with the region upstream of the C-myc gene. Binds specifically to the DNA sequence motif 5'-[AT]CT[AT][AT]T-3'. Probably has a role in DNA replication. This is RNA-binding motif, single-stranded-interacting protein 1 (RBMS1) from Bos taurus (Bovine).